A 456-amino-acid chain; its full sequence is Phosphomethylpyrimidine synthase (456 aa).

Residues Asn-80, Met-109, Tyr-139, His-175, 195 to 197 (SRG), 236 to 239 (DSLR), and Glu-275 contribute to the substrate site. His-279 contacts Zn(2+). Tyr-302 lines the substrate pocket. Residue His-343 participates in Zn(2+) binding. Residues Cys-423, Cys-426, and Cys-431 each contribute to the [4Fe-4S] cluster site.

The protein belongs to the ThiC family. The cofactor is [4Fe-4S] cluster.

It catalyses the reaction 5-amino-1-(5-phospho-beta-D-ribosyl)imidazole + S-adenosyl-L-methionine = 4-amino-2-methyl-5-(phosphooxymethyl)pyrimidine + CO + 5'-deoxyadenosine + formate + L-methionine + 3 H(+). It functions in the pathway cofactor biosynthesis; thiamine diphosphate biosynthesis. Its function is as follows. Catalyzes the synthesis of the hydroxymethylpyrimidine phosphate (HMP-P) moiety of thiamine from aminoimidazole ribotide (AIR) in a radical S-adenosyl-L-methionine (SAM)-dependent reaction. The polypeptide is Phosphomethylpyrimidine synthase (Prochlorococcus marinus (strain MIT 9215)).